Here is an 822-residue protein sequence, read N- to C-terminus: Aminopeptidase O (822 aa).

His480 lines the Zn(2+) pocket. Glu481 functions as the Proton acceptor in the catalytic mechanism. Residues His484 and Glu503 each contribute to the Zn(2+) site. The Nucleolar localization signal signature appears at 692-702 (RRPGKRQRRKR).

The protein belongs to the peptidase M1 family. The cofactor is Zn(2+).

Its subcellular location is the nucleus. It localises to the nucleolus. Its function is as follows. Aminopeptidase which catalyzes the hydrolysis of amino acid residues from the N-terminus of peptide or protein substrates. The polypeptide is Aminopeptidase O (Aopep) (Rattus norvegicus (Rat)).